A 286-amino-acid chain; its full sequence is Homoserine kinase (286 aa).

78–88 is an ATP binding site; it reads PLARGLGSSSS.

Belongs to the GHMP kinase family. Homoserine kinase subfamily.

Its subcellular location is the cytoplasm. It carries out the reaction L-homoserine + ATP = O-phospho-L-homoserine + ADP + H(+). Its pathway is amino-acid biosynthesis; L-threonine biosynthesis; L-threonine from L-aspartate: step 4/5. Functionally, catalyzes the ATP-dependent phosphorylation of L-homoserine to L-homoserine phosphate. This is Homoserine kinase from Streptococcus equi subsp. equi (strain 4047).